We begin with the raw amino-acid sequence, 77 residues long: Defensin-like protein 159 (77 aa).

A signal peptide spans 1-27; that stretch reads MAKLSCSYFLVLILVFSAFLMVERAEG. Disulfide bonds link Cys-30/Cys-77, Cys-40/Cys-59, Cys-45/Cys-71, and Cys-49/Cys-73.

Belongs to the DEFL family.

Its subcellular location is the secreted. This chain is Defensin-like protein 159 (LCR25), found in Arabidopsis thaliana (Mouse-ear cress).